The sequence spans 757 residues: 5-methyltetrahydropteroyltriglutamate--homocysteine methyltransferase (757 aa).

5-methyltetrahydropteroyltri-L-glutamate-binding positions include 15–18 (RELK) and Lys-114. L-homocysteine is bound by residues 428 to 430 (IGS) and Glu-481. L-methionine is bound by residues 428 to 430 (IGS) and Glu-481. 5-methyltetrahydropteroyltri-L-glutamate contacts are provided by residues 512–513 (RC) and Trp-558. Asp-596 contributes to the L-homocysteine binding site. Asp-596 is a binding site for L-methionine. Glu-602 contributes to the 5-methyltetrahydropteroyltri-L-glutamate binding site. His-639, Cys-641, and Glu-663 together coordinate Zn(2+). The active-site Proton donor is the His-692. Residue Cys-724 coordinates Zn(2+).

The protein belongs to the vitamin-B12 independent methionine synthase family. Zn(2+) is required as a cofactor.

The enzyme catalyses 5-methyltetrahydropteroyltri-L-glutamate + L-homocysteine = tetrahydropteroyltri-L-glutamate + L-methionine. Its pathway is amino-acid biosynthesis; L-methionine biosynthesis via de novo pathway; L-methionine from L-homocysteine (MetE route): step 1/1. Functionally, catalyzes the transfer of a methyl group from 5-methyltetrahydrofolate to homocysteine resulting in methionine formation. This Lactococcus lactis subsp. cremoris (strain SK11) protein is 5-methyltetrahydropteroyltriglutamate--homocysteine methyltransferase.